The sequence spans 254 residues: Alcohol dehydrogenase (254 aa).

9 to 32 lines the NAD(+) pocket; the sequence is IFVAGLGGIGLDTSRELVKRDLKN. Residue serine 138 coordinates substrate. Tyrosine 151 (proton acceptor) is an active-site residue.

This sequence belongs to the short-chain dehydrogenases/reductases (SDR) family. As to quaternary structure, homodimer.

The catalysed reaction is a primary alcohol + NAD(+) = an aldehyde + NADH + H(+). It catalyses the reaction a secondary alcohol + NAD(+) = a ketone + NADH + H(+). The chain is Alcohol dehydrogenase (Adh) from Drosophila paulistorum (Fruit fly).